A 227-amino-acid chain; its full sequence is DNA mismatch repair protein MutH (227 aa).

Belongs to the MutH family.

The protein resides in the cytoplasm. In terms of biological role, sequence-specific endonuclease that cleaves unmethylated GATC sequences. It is involved in DNA mismatch repair. This Vibrio vulnificus (strain CMCP6) protein is DNA mismatch repair protein MutH.